A 37-amino-acid polypeptide reads, in one-letter code: Large ribosomal subunit protein bL36c (37 aa).

It belongs to the bacterial ribosomal protein bL36 family.

It localises to the plastid. The sequence is that of Large ribosomal subunit protein bL36c (rpl36) from Epifagus virginiana (Beechdrops).